A 379-amino-acid polypeptide reads, in one-letter code: Cytochrome b (379 aa).

Helical transmembrane passes span 33–53 (FGSL…FLAM), 77–98 (WLIR…FIHV), 113–133 (WNIG…GYVL), and 178–198 (FFAF…VHLL). The heme b site is built by His-83 and His-97. His-182 and His-196 together coordinate heme b. His-201 is an a ubiquinone binding site. 4 consecutive transmembrane segments (helical) span residues 226–246 (IKDL…ALFF), 288–308 (LGGV…PLLN), 320–340 (ITQI…WIGG), and 347–367 (FTMI…ILMP).

It belongs to the cytochrome b family. In terms of assembly, the cytochrome bc1 complex contains 11 subunits: 3 respiratory subunits (MT-CYB, CYC1 and UQCRFS1), 2 core proteins (UQCRC1 and UQCRC2) and 6 low-molecular weight proteins (UQCRH/QCR6, UQCRB/QCR7, UQCRQ/QCR8, UQCR10/QCR9, UQCR11/QCR10 and a cleavage product of UQCRFS1). This cytochrome bc1 complex then forms a dimer. Heme b is required as a cofactor.

It localises to the mitochondrion inner membrane. In terms of biological role, component of the ubiquinol-cytochrome c reductase complex (complex III or cytochrome b-c1 complex) that is part of the mitochondrial respiratory chain. The b-c1 complex mediates electron transfer from ubiquinol to cytochrome c. Contributes to the generation of a proton gradient across the mitochondrial membrane that is then used for ATP synthesis. The polypeptide is Cytochrome b (MT-CYB) (Akodon dayi (Day's grass mouse)).